The primary structure comprises 216 residues: Protein InaA (216 aa).

It belongs to the protein kinase superfamily. KdkA/RfaP family.

Functionally, may be an environmental sensor responsive to several stimuli, including internal pH, proton motive force, temperature, and possibly other unknown factors. The polypeptide is Protein InaA (inaA) (Escherichia coli (strain K12)).